A 530-amino-acid chain; its full sequence is Autoinducer-2 kinase (530 aa).

This sequence belongs to the FGGY kinase family.

The protein resides in the cytoplasm. It carries out the reaction (S)-4,5-dihydroxypentane-2,3-dione + ATP = (2S)-2-hydroxy-3,4-dioxopentyl phosphate + ADP + H(+). Its function is as follows. Catalyzes the phosphorylation of autoinducer-2 (AI-2) to phospho-AI-2, which subsequently inactivates the transcriptional regulator LsrR and leads to the transcription of the lsr operon. Phosphorylates the ring-open form of (S)-4,5-dihydroxypentane-2,3-dione (DPD), which is the precursor to all AI-2 signaling molecules, at the C5 position. The protein is Autoinducer-2 kinase of Escherichia coli (strain ATCC 8739 / DSM 1576 / NBRC 3972 / NCIMB 8545 / WDCM 00012 / Crooks).